Here is a 143-residue protein sequence, read N- to C-terminus: Large ribosomal subunit protein uL15 (143 aa).

Composition is skewed to basic residues over residues 1–13 and 23–38; these read MIRK…KQRG and KKHR…GNAG. The segment at 1–38 is disordered; it reads MIRKSKKITKQRGSRTCGYGEAKKHRGAGHRGGRGNAG.

It belongs to the universal ribosomal protein uL15 family. In terms of assembly, part of the 50S ribosomal subunit.

Functionally, binds to the 23S rRNA. In Methanococcus vannielii, this protein is Large ribosomal subunit protein uL15.